The following is a 725-amino-acid chain: Glyoxysomal fatty acid beta-oxidation multifunctional protein MFP-a (725 aa).

Glu-119 acts as the Nucleophile in catalysis. Glu-139 functions as the Proton acceptor in the catalytic mechanism. The Microbody targeting signal signature appears at 723–725 (SRL).

This sequence in the N-terminal section; belongs to the enoyl-CoA hydratase/isomerase family. It in the central section; belongs to the 3-hydroxyacyl-CoA dehydrogenase family.

The protein localises to the glyoxysome. It carries out the reaction a (3S)-3-hydroxyacyl-CoA = a (2E)-enoyl-CoA + H2O. The catalysed reaction is a 4-saturated-(3S)-3-hydroxyacyl-CoA = a (3E)-enoyl-CoA + H2O. The enzyme catalyses a (3Z)-enoyl-CoA = a 4-saturated (2E)-enoyl-CoA. It catalyses the reaction a (3E)-enoyl-CoA = a 4-saturated (2E)-enoyl-CoA. It carries out the reaction (3S)-3-hydroxybutanoyl-CoA = (3R)-3-hydroxybutanoyl-CoA. The catalysed reaction is a (3S)-3-hydroxyacyl-CoA + NAD(+) = a 3-oxoacyl-CoA + NADH + H(+). It functions in the pathway lipid metabolism; fatty acid beta-oxidation. This chain is Glyoxysomal fatty acid beta-oxidation multifunctional protein MFP-a, found in Brassica napus (Rape).